Consider the following 179-residue polypeptide: MSRIGKSPIPIPDKVSVSLDGLAVTVKGPKGELKRTLPDGVTVNQVDNTIVVAPTSEKRQSRERHGLCRTLVANMIEGVSKGYSKKLEIVGVGSRAQVKGKTLVVSAGYSHPVEMLAPEGITFAVENNTNVTVSGTDKELVGNEAAKIRAIRPPEPYKGKGIKYAGERILRKAGKSGKK.

It belongs to the universal ribosomal protein uL6 family. Part of the 50S ribosomal subunit.

In terms of biological role, this protein binds to the 23S rRNA, and is important in its secondary structure. It is located near the subunit interface in the base of the L7/L12 stalk, and near the tRNA binding site of the peptidyltransferase center. The protein is Large ribosomal subunit protein uL6 of Synechococcus sp. (strain WH7803).